Here is a 92-residue protein sequence, read N- to C-terminus: FMRFamide-like neuropeptides 5 (92 aa).

Positions 1–41 are excised as a propeptide; it reads MSSRSTTIAFLFIATLLVFQCVSAQSSAEDADYLEKYQRIA. Phe51 and Phe61 each carry phenylalanine amide. Residues 64-82 constitute a propeptide that is removed on maturation; sequence SRNTWEDGYASPSVNELYV. A Phenylalanine amide modification is found at Phe91.

It belongs to the FARP (FMRFamide related peptide) family. As to expression, each flp gene is expressed in a distinct set of neurons. Flp-5 is expressed in the ASE sensory neurons, the 14 and M4 cholinergic pharyngeal motoneurons, and the PVT and RMG neurons. It is weakly expressed in the PB and 12 neurons. Also expressed in pharyngeal muscle.

It localises to the secreted. Its function is as follows. FMRFamides and FMRFamide-like peptides are neuropeptides. GAKFIRF-amide has an excitatory effect on dissected pharyngeal myogenic muscle system. In Caenorhabditis elegans, this protein is FMRFamide-like neuropeptides 5.